The sequence spans 773 residues: Lon protease homolog 2, peroxisomal (773 aa).

The 190-residue stretch at 9–198 (LPVIVVDSGV…MCEKWMQMQR (190 aa)) folds into the Lon N-terminal domain. 336–343 (GPPGIGKT) is a binding site for ATP. Residues 587 to 766 (PLPPGVCFGL…EDVIEAMMEK (180 aa)) form the Lon proteolytic domain. Active-site residues include Ser-672 and Lys-715. The short motif at 771–773 (AKL) is the Microbody targeting signal element.

It belongs to the peptidase S16 family.

It is found in the peroxisome matrix. The enzyme catalyses Hydrolysis of proteins in presence of ATP.. Functionally, ATP-dependent serine protease that mediates the selective degradation of misfolded and unassembled polypeptides in the peroxisomal matrix. Necessary for type 2 peroxisome targeting signal (PTS2)-containing protein processing and facilitates peroxisome matrix protein import. The protein is Lon protease homolog 2, peroxisomal of Caenorhabditis briggsae.